The chain runs to 261 residues: MNILPKKSWHVRNKDNVARVRRDEAQAREEEKERERRVLLAQQEARTEFLRKKARQRNSVPELEAADPGAPSSGPVDLFRELLEERKGVPRGNKEHEEEKRREKERQEKALGILTYLGQSAAEAQTQPPWYQLPPGQKDCCPPGPSPDEKIKNRLDPLKEMQKHLAKKRHSSESRPSREERPQKQRPREPPSLEKLRAERLQREAAERARAEALLARVQGQVSQQGQVEAEETDERRRRYNSQFNPQLARRPRQQNPTPAH.

Positions 1–261 (MNILPKKSWH…PRQQNPTPAH (261 aa)) are disordered. The segment covering 12–38 (RNKDNVARVRRDEAQAREEEKERERRV) has biased composition (basic and acidic residues). Positions 16-46 (NVARVRRDEAQAREEEKERERRVLLAQQEAR) form a coiled coil. Ser-59 carries the phosphoserine modification. Composition is skewed to basic and acidic residues over residues 78–109 (LFRE…RQEK), 147–163 (PDEK…EMQK), and 171–211 (SSES…RARA). Positions 192 to 222 (SLEKLRAERLQREAAERARAEALLARVQGQV) form a coiled coil. Positions 212–228 (EALLARVQGQVSQQGQV) are enriched in low complexity. A Phosphoserine modification is found at Ser-242.

This chain is Leukocyte receptor cluster member 1 homolog (Leng1), found in Mus musculus (Mouse).